The sequence spans 65 residues: Large ribosomal subunit protein bL35 (65 aa).

The protein belongs to the bacterial ribosomal protein bL35 family.

This Heliobacterium modesticaldum (strain ATCC 51547 / Ice1) protein is Large ribosomal subunit protein bL35.